A 343-amino-acid chain; its full sequence is GTPase Obg (343 aa).

An Obg domain is found at 2–160 (EKFVDRVKIF…RWIILELKLI (159 aa)). One can recognise an OBG-type G domain in the interval 161-332 (ADVGLVGFPN…LKEGLWKKYE (172 aa)). Residues 167–174 (GFPNAGKS), 192–196 (FTTLS), 214–217 (DIPG), 284–287 (NKID), and 313–315 (SAL) each bind GTP. Mg(2+) contacts are provided by serine 174 and threonine 194.

Belongs to the TRAFAC class OBG-HflX-like GTPase superfamily. OBG GTPase family. Monomer. It depends on Mg(2+) as a cofactor.

The protein resides in the cytoplasm. An essential GTPase which binds GTP, GDP and possibly (p)ppGpp with moderate affinity, with high nucleotide exchange rates and a fairly low GTP hydrolysis rate. Plays a role in control of the cell cycle, stress response, ribosome biogenesis and in those bacteria that undergo differentiation, in morphogenesis control. The polypeptide is GTPase Obg (Aquifex aeolicus (strain VF5)).